A 519-amino-acid chain; its full sequence is Maltose/maltodextrin transport system permease protein MalF (519 aa).

The Cytoplasmic portion of the chain corresponds to M1–D18. Residues A19 to A41 traverse the membrane as a helical segment. Residues Q42–E44 lie on the Periplasmic side of the membrane. The chain crosses the membrane as a helical span at residues Y45–F62. Over A63–Y74 the chain is Cytoplasmic. A helical transmembrane segment spans residues P75–T97. The Periplasmic segment spans residues N98–W288. An ABC transmembrane type-1 domain is found at F286–N510. The helical transmembrane segment at T289 to V311 threads the bilayer. Topologically, residues Q312 to R323 are cytoplasmic. Residues V324–N346 form a helical membrane-spanning segment. Residues Q347–R374 lie on the Periplasmic side of the membrane. The helical transmembrane segment at T375 to L397 threads the bilayer. Over K398 to Q417 the chain is Cytoplasmic. A helical membrane pass occupies residues N418–A440. At F441–D488 the chain is on the periplasmic side. Residues F489–L511 form a helical membrane-spanning segment. Residues K512–D519 lie on the Cytoplasmic side of the membrane.

It belongs to the binding-protein-dependent transport system permease family. MalFG subfamily. In terms of assembly, the complex is composed of two ATP-binding proteins (MalK), two transmembrane proteins (MalG and MalF) and a solute-binding protein (MalE).

It localises to the cell inner membrane. Part of the ABC transporter complex MalEFGK involved in maltose/maltodextrin import. Probably responsible for the translocation of the substrate across the membrane. The chain is Maltose/maltodextrin transport system permease protein MalF (malF) from Escherichia coli O6:H1 (strain CFT073 / ATCC 700928 / UPEC).